Reading from the N-terminus, the 361-residue chain is UDP-N-acetylglucosamine--N-acetylmuramyl-(pentapeptide) pyrophosphoryl-undecaprenol N-acetylglucosamine transferase (361 aa).

UDP-N-acetyl-alpha-D-glucosamine contacts are provided by residues 12–14 (TGG), Asn124, Arg163, Ser189, Ile241, 260–265 (ALTVSE), and Gln286.

Belongs to the glycosyltransferase 28 family. MurG subfamily.

It localises to the cell inner membrane. The enzyme catalyses di-trans,octa-cis-undecaprenyl diphospho-N-acetyl-alpha-D-muramoyl-L-alanyl-D-glutamyl-meso-2,6-diaminopimeloyl-D-alanyl-D-alanine + UDP-N-acetyl-alpha-D-glucosamine = di-trans,octa-cis-undecaprenyl diphospho-[N-acetyl-alpha-D-glucosaminyl-(1-&gt;4)]-N-acetyl-alpha-D-muramoyl-L-alanyl-D-glutamyl-meso-2,6-diaminopimeloyl-D-alanyl-D-alanine + UDP + H(+). It functions in the pathway cell wall biogenesis; peptidoglycan biosynthesis. In terms of biological role, cell wall formation. Catalyzes the transfer of a GlcNAc subunit on undecaprenyl-pyrophosphoryl-MurNAc-pentapeptide (lipid intermediate I) to form undecaprenyl-pyrophosphoryl-MurNAc-(pentapeptide)GlcNAc (lipid intermediate II). This is UDP-N-acetylglucosamine--N-acetylmuramyl-(pentapeptide) pyrophosphoryl-undecaprenol N-acetylglucosamine transferase from Aeromonas hydrophila subsp. hydrophila (strain ATCC 7966 / DSM 30187 / BCRC 13018 / CCUG 14551 / JCM 1027 / KCTC 2358 / NCIMB 9240 / NCTC 8049).